A 465-amino-acid chain; its full sequence is VGFKAGVKEYKLTYYTPTYETKDTDILAAFRVTPQPGVPPEEAGAAVAAESSTGTWTTVWTDGLTSLDRYKGRCYHIEPVAGEESQFIAYVAYPLDLFEEGSVTNMFTSIVGNVFGFKALRALRLEDLRIPVAYVKTFQGPPHGIQVERDKLNKYGRPLLGCTIKPKLGLSAKNYGRAVYECLRGGLDFTKDDENVNSQPFMRWRDRFLFCAEANYKSQAETGEIKGHYLNATAGTCEEMMKRAVFARELGVPIVMHDYLTGGFTANTSLAHYCRDNGLLLHIHRAMHAVIDRQKNHGIHFRVLAKALRMSGGDHIHSGTVVGKLEGERDITLGFVDLLRDDFVEKDRSRGIYFTQDWVSLPGVLPVASGGIHVWHMPALTEIFGDDSVLQFGGGTLGHPWGKPPGAVANRVALEACVQARNEGRDLAREGNEIIREASKWSPELAAACEVWKEIKFEFEAMDTL.

The residue at position 4 (lysine 4) is an N6,N6,N6-trimethyllysine. Asparagine 113 and threonine 163 together coordinate substrate. Lysine 165 functions as the Proton acceptor in the catalytic mechanism. Lysine 167 contacts substrate. Mg(2+) is bound by residues lysine 191, aspartate 193, and glutamate 194. Lysine 191 carries the post-translational modification N6-carboxylysine. Histidine 284 functions as the Proton acceptor in the catalytic mechanism. Arginine 285, histidine 317, and serine 369 together coordinate substrate.

It belongs to the RuBisCO large chain family. Type I subfamily. In terms of assembly, heterohexadecamer of 8 large chains and 8 small chains; disulfide-linked. The disulfide link is formed within the large subunit homodimers. Mg(2+) is required as a cofactor. Post-translationally, the disulfide bond which can form in the large chain dimeric partners within the hexadecamer appears to be associated with oxidative stress and protein turnover.

It is found in the plastid. Its subcellular location is the chloroplast. The enzyme catalyses 2 (2R)-3-phosphoglycerate + 2 H(+) = D-ribulose 1,5-bisphosphate + CO2 + H2O. It catalyses the reaction D-ribulose 1,5-bisphosphate + O2 = 2-phosphoglycolate + (2R)-3-phosphoglycerate + 2 H(+). In terms of biological role, ruBisCO catalyzes two reactions: the carboxylation of D-ribulose 1,5-bisphosphate, the primary event in carbon dioxide fixation, as well as the oxidative fragmentation of the pentose substrate in the photorespiration process. Both reactions occur simultaneously and in competition at the same active site. In Cornus canadensis (Bunchberry dogwood), this protein is Ribulose bisphosphate carboxylase large chain.